Consider the following 198-residue polypeptide: MEPGLWLLFGLTVTSAAGLVPCPQPGDAGKSGVPGTPPTARSEGDIQEPVAMTAVQGPSPRSPEQEQELGRFGEQASKGGPVHGRARRCTCFTYKDKECVYYCHLDIIWINTPEQTVPYGLSNYRGSFRGRRSTGLFPQSPQPSKWTQRCACVQSQDSACLHFCTRTLAVSRNSRTATNPDKEEEPASRGNGGLRPTR.

An N-terminal signal peptide occupies residues 1-16 (MEPGLWLLFGLTVTSA). Positions 17–86 (AGLVPCPQPG…SKGGPVHGRA (70 aa)) are excised as a propeptide. Positions 22–79 (CPQPGDAGKSGVPGTPPTARSEGDIQEPVAMTAVQGPSPRSPEQEQELGRFGEQASKG) are disordered. Disulfide bonds link Cys-89/Cys-103 and Cys-91/Cys-99. Residues 110–198 (INTPEQTVPY…RGNGGLRPTR (89 aa)) constitute a propeptide that is removed on maturation. The interval 150–164 (CACVQSQDSACLHFC) is endothelin-like. The interval 174–198 (SRTATNPDKEEEPASRGNGGLRPTR) is disordered.

It belongs to the endothelin/sarafotoxin family. Expressed in which included heart, lung, liver, kidney, spleen, stomach, pancreas, duodenum, colon, uterus, ovary and testis.

The protein localises to the secreted. Functionally, endothelins are endothelium-derived vasoconstrictor peptides. The chain is Endothelin-3 (EDN3) from Canis lupus familiaris (Dog).